A 97-amino-acid chain; its full sequence is Acylphosphatase (97 aa).

Residues 5–92 (RAHVWISGRV…GEFVRFEITF (88 aa)) form the Acylphosphatase-like domain. Residues Arg-20 and Asn-38 contribute to the active site.

This sequence belongs to the acylphosphatase family.

The catalysed reaction is an acyl phosphate + H2O = a carboxylate + phosphate + H(+). This is Acylphosphatase (acyP) from Syntrophobacter fumaroxidans (strain DSM 10017 / MPOB).